Reading from the N-terminus, the 873-residue chain is Serine/threonine-protein phosphatase 4 regulatory subunit 4 (873 aa).

HEAT repeat units follow at residues 213–251 (ILPL…TKSV), 252–290 (VLPE…RSQT), and 392–427 (NFHM…SKLL). Residues 686–720 (QKKFYEKDLLDQEKEREELLLLEMEQLEKEKQQND) adopt a coiled-coil conformation. Residues 713-737 (EKEKQQNDGRPMSDKMFEKKRRDTK) are compositionally biased toward basic and acidic residues. The segment at 713-766 (EKEKQQNDGRPMSDKMFEKKRRDTKTPTQSLPKNIPISVPGPSSVTPSTSKEIK) is disordered. Residues 747–762 (IPISVPGPSSVTPSTS) are compositionally biased toward low complexity. The residue at position 775 (Ser775) is a Phosphoserine. Thr797 is modified (phosphothreonine). Polar residues predominate over residues 822 to 858 (TRNASSVPSSFSPNTPLPSTSRGTGNSVDPKSSGSKD). The segment at 822 to 873 (TRNASSVPSSFSPNTPLPSTSRGTGNSVDPKSSGSKDTQPRKATLKSRKSNP) is disordered. Residues 864-873 (ATLKSRKSNP) show a composition bias toward basic residues.

Serine/threonine-protein phosphatase 4 (PP4) occurs in different assemblies of the catalytic and one or more regulatory subunits. Component of the PP4 complex PPP4C-PPP4R4.

The protein resides in the cytoplasm. Putative regulatory subunit of serine/threonine-protein phosphatase 4. In Homo sapiens (Human), this protein is Serine/threonine-protein phosphatase 4 regulatory subunit 4 (PPP4R4).